A 250-amino-acid chain; its full sequence is Endomucin (250 aa).

An N-terminal signal peptide occupies residues 1–20; sequence MRLLQVTALFFLLSNSLCRG. 2 stretches are compositionally biased toward low complexity: residues 24 to 38 and 45 to 60; these read KALT…SATT and TNKS…TTNS. 2 disordered regions span residues 24–83 and 105–153; these read KALT…ETTT and NAVS…LTTA. N46, N115, and N119 each carry an N-linked (GlcNAc...) asparagine glycan. Polar residues-rich tracts occupy residues 105–135 and 143–153; these read NAVS…NQLP and TETPSASLTTA. A helical membrane pass occupies residues 180-200; sequence VILPVVIALIVITVLVFTLVG. The disordered stretch occupies residues 210–250; that stretch reads PGTPESGNDQPQSDKESVKLLTVKTISHESGEHSAQGKAKN. S226 bears the Phosphoserine mark.

Post-translationally, highly O-glycosylated. Sialic acid-rich glycoprotein.

Its subcellular location is the membrane. Functionally, endothelial sialomucin, also called endomucin or mucin-like sialoglycoprotein, which interferes with the assembly of focal adhesion complexes and inhibits interaction between cells and the extracellular matrix. The chain is Endomucin (Emcn) from Rattus norvegicus (Rat).